The sequence spans 338 residues: Ketol-acid reductoisomerase (NADP(+)) (338 aa).

One can recognise a KARI N-terminal Rossmann domain in the interval 1 to 181 (MKVFYDKDCD…GGGKAGIIET (181 aa)). NADP(+)-binding positions include 24–27 (YGSQ), Arg-47, and Ser-52. His-107 is a catalytic residue. Gly-133 is a binding site for NADP(+). The KARI C-terminal knotted domain maps to 182–327 (NFKEETETDL…AQLRAMMPWI (146 aa)). Mg(2+) contacts are provided by Asp-190, Glu-194, Glu-226, and Glu-230. Residue Ser-251 participates in substrate binding.

Belongs to the ketol-acid reductoisomerase family. Mg(2+) is required as a cofactor.

It carries out the reaction (2R)-2,3-dihydroxy-3-methylbutanoate + NADP(+) = (2S)-2-acetolactate + NADPH + H(+). It catalyses the reaction (2R,3R)-2,3-dihydroxy-3-methylpentanoate + NADP(+) = (S)-2-ethyl-2-hydroxy-3-oxobutanoate + NADPH + H(+). It functions in the pathway amino-acid biosynthesis; L-isoleucine biosynthesis; L-isoleucine from 2-oxobutanoate: step 2/4. Its pathway is amino-acid biosynthesis; L-valine biosynthesis; L-valine from pyruvate: step 2/4. Functionally, involved in the biosynthesis of branched-chain amino acids (BCAA). Catalyzes an alkyl-migration followed by a ketol-acid reduction of (S)-2-acetolactate (S2AL) to yield (R)-2,3-dihydroxy-isovalerate. In the isomerase reaction, S2AL is rearranged via a Mg-dependent methyl migration to produce 3-hydroxy-3-methyl-2-ketobutyrate (HMKB). In the reductase reaction, this 2-ketoacid undergoes a metal-dependent reduction by NADPH to yield (R)-2,3-dihydroxy-isovalerate. The protein is Ketol-acid reductoisomerase (NADP(+)) of Acidovorax ebreus (strain TPSY) (Diaphorobacter sp. (strain TPSY)).